A 421-amino-acid chain; its full sequence is Carboxypeptidase A4 (421 aa).

The first 16 residues, M1–C16, serve as a signal peptide directing secretion. The propeptide at G17–R113 is activation peptide. Positions 69, 71, 119, 123, 124, 125, 127, and 163 each coordinate a protein. One can recognise a Peptidase M14 domain in the interval A122–V416. Zn(2+)-binding residues include H181 and E184. A protein contacts are provided by R196, K197, and S248. C250 and C273 form a disulfide bridge. N260 carries an N-linked (GlcNAc...) asparagine glycan. A protein is bound at residue D270. H308 is a Zn(2+) binding site. E382 (proton donor/acceptor) is an active-site residue.

The protein belongs to the peptidase M14 family. As to quaternary structure, monomer. Interacts with LXN. Zn(2+) serves as cofactor. Fetal expression in the adrenal gland, brain, heart, intestine, kidney, liver and lung. Except for fetal brain that shows no imprinting, expression was found preferentially from the maternal allele.

The protein resides in the secreted. Inhibited by interaction with the metallocarboxypeptidase inhibitor (MCPI) from N.versicolor that binds to the catalytic zinc ion. Also inhibited by interaction with the S.magnifica carboxypeptidase inhibitor SmCI that penetrates the active site groove and inhibits activity by emulating a C-terminal substrate. Additionally inhibited by a carboxypeptidase inhibitor from H.medicinalis (leech) and R.bursa (tick). Its function is as follows. Metalloprotease that cleaves hydrophobic C-terminal residues with a preference for -Phe, -Leu, -Ile, -Met, -Tyr and -Val. May function in peptide hormone and/or neuropeptide catabolism. The sequence is that of Carboxypeptidase A4 (CPA4) from Homo sapiens (Human).